Reading from the N-terminus, the 343-residue chain is Probable dual-specificity RNA methyltransferase RlmN (343 aa).

The active-site Proton acceptor is glutamate 93. The region spanning 99–320 (TDDRATLCVS…NAKGVVCTIR (222 aa)) is the Radical SAM core domain. Cysteine 106 and cysteine 331 are joined by a disulfide. [4Fe-4S] cluster-binding residues include cysteine 113, cysteine 117, and cysteine 120. Residues 158-159 (GE), serine 190, 212-214 (SLH), and histidine 288 contribute to the S-adenosyl-L-methionine site. The active-site S-methylcysteine intermediate is cysteine 331.

The protein belongs to the radical SAM superfamily. RlmN family. It depends on [4Fe-4S] cluster as a cofactor.

It localises to the cytoplasm. It catalyses the reaction adenosine(2503) in 23S rRNA + 2 reduced [2Fe-2S]-[ferredoxin] + 2 S-adenosyl-L-methionine = 2-methyladenosine(2503) in 23S rRNA + 5'-deoxyadenosine + L-methionine + 2 oxidized [2Fe-2S]-[ferredoxin] + S-adenosyl-L-homocysteine. The catalysed reaction is adenosine(37) in tRNA + 2 reduced [2Fe-2S]-[ferredoxin] + 2 S-adenosyl-L-methionine = 2-methyladenosine(37) in tRNA + 5'-deoxyadenosine + L-methionine + 2 oxidized [2Fe-2S]-[ferredoxin] + S-adenosyl-L-homocysteine. In terms of biological role, specifically methylates position 2 of adenine 2503 in 23S rRNA and position 2 of adenine 37 in tRNAs. This is Probable dual-specificity RNA methyltransferase RlmN from Parabacteroides distasonis (strain ATCC 8503 / DSM 20701 / CIP 104284 / JCM 5825 / NCTC 11152).